We begin with the raw amino-acid sequence, 199 residues long: NAD(P)H dehydrogenase (quinone) (199 aa).

Positions 4 to 190 (VLVLYYSAYG…DAARFQGAHV (187 aa)) constitute a Flavodoxin-like domain. FMN-binding positions include 10–15 (SAYGHI) and 78–80 (TRY). NAD(+) is bound at residue Tyr-12. Residue Trp-98 coordinates substrate. Residues 113–119 (SSATQHG) and His-134 contribute to the FMN site.

Belongs to the WrbA family. FMN serves as cofactor.

The catalysed reaction is a quinone + NADH + H(+) = a quinol + NAD(+). It catalyses the reaction a quinone + NADPH + H(+) = a quinol + NADP(+). The chain is NAD(P)H dehydrogenase (quinone) from Sinorhizobium fredii (strain NBRC 101917 / NGR234).